The chain runs to 282 residues: Ribosomal RNA small subunit methyltransferase I (282 aa).

This sequence belongs to the methyltransferase superfamily. RsmI family.

Its subcellular location is the cytoplasm. It catalyses the reaction cytidine(1402) in 16S rRNA + S-adenosyl-L-methionine = 2'-O-methylcytidine(1402) in 16S rRNA + S-adenosyl-L-homocysteine + H(+). Its function is as follows. Catalyzes the 2'-O-methylation of the ribose of cytidine 1402 (C1402) in 16S rRNA. This is Ribosomal RNA small subunit methyltransferase I from Pseudomonas aeruginosa (strain ATCC 15692 / DSM 22644 / CIP 104116 / JCM 14847 / LMG 12228 / 1C / PRS 101 / PAO1).